The chain runs to 101 residues: Small ribosomal subunit protein uS14 (101 aa).

The protein belongs to the universal ribosomal protein uS14 family. In terms of assembly, part of the 30S ribosomal subunit. Contacts proteins S3 and S10.

Functionally, binds 16S rRNA, required for the assembly of 30S particles and may also be responsible for determining the conformation of the 16S rRNA at the A site. The chain is Small ribosomal subunit protein uS14 from Sphingopyxis alaskensis (strain DSM 13593 / LMG 18877 / RB2256) (Sphingomonas alaskensis).